The primary structure comprises 301 residues: Glutamine amidotransferase-like protein GlxB (301 aa).

The active site involves cysteine 2. Residues 2-298 (CGIVGLFLKD…PATVYFWDHQ (297 aa)) enclose the Glutamine amidotransferase type-2 domain.

The polypeptide is Glutamine amidotransferase-like protein GlxB (glxB) (Rhizobium meliloti (strain 1021) (Ensifer meliloti)).